Consider the following 544-residue polypeptide: Chaperonin GroEL 1 (544 aa).

ATP-binding positions include 29–32 (TLGP), 86–90 (DGTTT), Gly-413, 482–484 (NVL), and Asp-498.

It belongs to the chaperonin (HSP60) family. As to quaternary structure, forms a cylinder of 14 subunits composed of two heptameric rings stacked back-to-back. Interacts with the co-chaperonin GroES.

The protein localises to the cytoplasm. The catalysed reaction is ATP + H2O + a folded polypeptide = ADP + phosphate + an unfolded polypeptide.. Together with its co-chaperonin GroES, plays an essential role in assisting protein folding. The GroEL-GroES system forms a nano-cage that allows encapsulation of the non-native substrate proteins and provides a physical environment optimized to promote and accelerate protein folding. This Chloroflexus aurantiacus (strain ATCC 29366 / DSM 635 / J-10-fl) protein is Chaperonin GroEL 1.